The sequence spans 147 residues: Hemoglobin subunit beta (147 aa).

Residues 3-147 form the Globin domain; the sequence is EWTDDERAII…VVSALGRQYH (145 aa). Heme b-binding residues include His64 and His93.

Belongs to the globin family. In terms of assembly, heterotetramer of two alpha chains and two beta chains. As to expression, red blood cells.

Functionally, involved in oxygen transport from gills to the various peripheral tissues. This Merlangius merlangus (Whiting) protein is Hemoglobin subunit beta (hbb).